Consider the following 300-residue polypeptide: ATP-dependent (S)-NAD(P)H-hydrate dehydratase (300 aa).

In terms of domain architecture, YjeF C-terminal spans 14–293 (LLALFKTVVP…NQIPSVFQTE (280 aa)). Residues G114 and 167–173 (NVMEFQR) each bind (6S)-NADPHX. ATP contacts are provided by residues 198-202 (KGAND) and 219-228 (GSGRRCGGQG). Residue D229 coordinates (6S)-NADPHX.

Belongs to the NnrD/CARKD family. Requires Mg(2+) as cofactor.

It catalyses the reaction (6S)-NADHX + ATP = ADP + phosphate + NADH + H(+). It carries out the reaction (6S)-NADPHX + ATP = ADP + phosphate + NADPH + H(+). In terms of biological role, catalyzes the dehydration of the S-form of NAD(P)HX at the expense of ATP, which is converted to ADP. Together with NAD(P)HX epimerase, which catalyzes the epimerization of the S- and R-forms, the enzyme allows the repair of both epimers of NAD(P)HX, a damaged form of NAD(P)H that is a result of enzymatic or heat-dependent hydration. This is ATP-dependent (S)-NAD(P)H-hydrate dehydratase from Drosophila melanogaster (Fruit fly).